Here is a 146-residue protein sequence, read N- to C-terminus: Transmembrane protein 207 (146 aa).

A signal peptide spans 1 to 29; sequence MSRSRLFSVTSAISTIGILCLPLFQLVLS. The helical transmembrane segment at 52–72 threads the bilayer; that stretch reads IWILLLLVLVAALLCGAVVLC.

As to quaternary structure, interacts with WWOX. As to expression, expressed in some signet-ring cell carcinoma, especially those showing high invasion and metastatic activity (at protein level).

The protein resides in the membrane. The chain is Transmembrane protein 207 (TMEM207) from Homo sapiens (Human).